Consider the following 443-residue polypeptide: Glutamate-1-semialdehyde 2,1-aminomutase (443 aa).

Lysine 277 bears the N6-(pyridoxal phosphate)lysine mark.

This sequence belongs to the class-III pyridoxal-phosphate-dependent aminotransferase family. HemL subfamily. Homodimer. Pyridoxal 5'-phosphate serves as cofactor.

The protein localises to the cytoplasm. It catalyses the reaction (S)-4-amino-5-oxopentanoate = 5-aminolevulinate. The protein operates within porphyrin-containing compound metabolism; protoporphyrin-IX biosynthesis; 5-aminolevulinate from L-glutamyl-tRNA(Glu): step 2/2. This chain is Glutamate-1-semialdehyde 2,1-aminomutase, found in Pseudarthrobacter chlorophenolicus (strain ATCC 700700 / DSM 12829 / CIP 107037 / JCM 12360 / KCTC 9906 / NCIMB 13794 / A6) (Arthrobacter chlorophenolicus).